The primary structure comprises 204 residues: Somatotropin (204 aa).

A signal peptide spans 1–17 (MDRAILLLSVVCLVVSS). Gln18 carries the pyrrolidone carboxylic acid modification. His36 provides a ligand contact to Zn(2+). Cys69 and Cys177 are joined by a disulfide. A Zn(2+)-binding site is contributed by Glu186. Cysteines 194 and 202 form a disulfide.

The protein belongs to the somatotropin/prolactin family.

It is found in the secreted. In terms of biological role, growth hormone plays an important role in growth control and is involved in the regulation of several anabolic processes. Implicated as an osmoregulatory substance important for seawater adaptation. This Odontesthes argentinensis (Marine silverside) protein is Somatotropin (gh).